We begin with the raw amino-acid sequence, 548 residues long: Membrane protein insertase YidC (548 aa).

Residues 6-26 (NLLVIALLFVSFMIWQAWEQD) form a helical membrane-spanning segment. Residues 28–55 (NPQPQAQQTTQTTTTAAGSAADQGVPAS) are disordered. Residues 30–50 (QPQAQQTTQTTTTAAGSAADQ) show a composition bias toward low complexity. 4 helical membrane-spanning segments follow: residues 350 to 370 (FVGNWGFSIIIITFIVRGIMY), 420 to 440 (LGGCFPLLIQMPIFLALYYML), 458 to 478 (LSAQDPYYILPILMGVTMFFI), and 499 to 519 (PVIFTVFFLWFPSGLVLYYIV).

The protein belongs to the OXA1/ALB3/YidC family. Type 1 subfamily. In terms of assembly, interacts with the Sec translocase complex via SecD. Specifically interacts with transmembrane segments of nascent integral membrane proteins during membrane integration.

The protein resides in the cell inner membrane. In terms of biological role, required for the insertion and/or proper folding and/or complex formation of integral membrane proteins into the membrane. Involved in integration of membrane proteins that insert both dependently and independently of the Sec translocase complex, as well as at least some lipoproteins. Aids folding of multispanning membrane proteins. This Shigella dysenteriae serotype 1 (strain Sd197) protein is Membrane protein insertase YidC.